A 179-amino-acid polypeptide reads, in one-letter code: ATP synthase subunit delta (179 aa).

The protein belongs to the ATPase delta chain family. In terms of assembly, F-type ATPases have 2 components, F(1) - the catalytic core - and F(0) - the membrane proton channel. F(1) has five subunits: alpha(3), beta(3), gamma(1), delta(1), epsilon(1). F(0) has three main subunits: a(1), b(2) and c(10-14). The alpha and beta chains form an alternating ring which encloses part of the gamma chain. F(1) is attached to F(0) by a central stalk formed by the gamma and epsilon chains, while a peripheral stalk is formed by the delta and b chains.

The protein localises to the cell membrane. Functionally, f(1)F(0) ATP synthase produces ATP from ADP in the presence of a proton or sodium gradient. F-type ATPases consist of two structural domains, F(1) containing the extramembraneous catalytic core and F(0) containing the membrane proton channel, linked together by a central stalk and a peripheral stalk. During catalysis, ATP synthesis in the catalytic domain of F(1) is coupled via a rotary mechanism of the central stalk subunits to proton translocation. In terms of biological role, this protein is part of the stalk that links CF(0) to CF(1). It either transmits conformational changes from CF(0) to CF(1) or is implicated in proton conduction. This Staphylococcus epidermidis (strain ATCC 35984 / DSM 28319 / BCRC 17069 / CCUG 31568 / BM 3577 / RP62A) protein is ATP synthase subunit delta.